A 236-amino-acid chain; its full sequence is NAP1-binding protein 2 (236 aa).

A Phosphoserine modification is found at Ser-102. In terms of domain architecture, SH3 spans 110–171; the sequence is IVNQRAVALY…PEEFVSYIQP (62 aa). 2 positions are modified to phosphoserine: Ser-196 and Ser-235.

Interacts with PBS2 and PTC1.

The protein localises to the cytoplasm. Negatively regulates the high-osmolarity glycerol (HOG) pathway through its negative regulation of the HOG1 kinase activity. Mediates the binding between the PTC1 phosphatase and the PBS2 MAP/ERK kinase (MEK). With PTC1, regulates endoplasmic reticulum inheritance through the cell wall integrity (CWI) MAPK pathway by modulating the MAPK, SLT2. The chain is NAP1-binding protein 2 (NBP2) from Saccharomyces cerevisiae (strain ATCC 204508 / S288c) (Baker's yeast).